We begin with the raw amino-acid sequence, 203 residues long: Proteasome subunit beta 1 (203 aa).

A propeptide spans 1–7 (MAEKLKG) (removed in mature form; by autocatalysis). T8 acts as the Nucleophile in catalysis.

The protein belongs to the peptidase T1B family. As to quaternary structure, the 20S proteasome core is composed of 14 alpha and 14 beta subunits that assemble into four stacked heptameric rings, resulting in a barrel-shaped structure. The two inner rings, each composed of seven catalytic beta subunits, are sandwiched by two outer rings, each composed of seven alpha subunits. The catalytic chamber with the active sites is on the inside of the barrel. Has a gated structure, the ends of the cylinder being occluded by the N-termini of the alpha-subunits. Is capped at one or both ends by the proteasome regulatory ATPase, PAN.

The protein localises to the cytoplasm. The catalysed reaction is Cleavage of peptide bonds with very broad specificity.. Its activity is regulated as follows. The formation of the proteasomal ATPase PAN-20S proteasome complex, via the docking of the C-termini of PAN into the intersubunit pockets in the alpha-rings, triggers opening of the gate for substrate entry. Interconversion between the open-gate and close-gate conformations leads to a dynamic regulation of the 20S proteasome proteolysis activity. Component of the proteasome core, a large protease complex with broad specificity involved in protein degradation. The chain is Proteasome subunit beta 1 from Thermococcus onnurineus (strain NA1).